Here is a 224-residue protein sequence, read N- to C-terminus: 7-cyano-7-deazaguanine synthase (224 aa).

9–19 (ISGGMDSTLCA) serves as a coordination point for ATP. Zn(2+)-binding residues include C190, C198, C201, and C204.

This sequence belongs to the QueC family. Zn(2+) serves as cofactor.

The enzyme catalyses 7-carboxy-7-deazaguanine + NH4(+) + ATP = 7-cyano-7-deazaguanine + ADP + phosphate + H2O + H(+). It participates in purine metabolism; 7-cyano-7-deazaguanine biosynthesis. Its function is as follows. Catalyzes the ATP-dependent conversion of 7-carboxy-7-deazaguanine (CDG) to 7-cyano-7-deazaguanine (preQ(0)). The polypeptide is 7-cyano-7-deazaguanine synthase (Campylobacter jejuni subsp. jejuni serotype O:6 (strain 81116 / NCTC 11828)).